Consider the following 210-residue polypeptide: Nucleoside triphosphate pyrophosphatase (210 aa).

The active-site Proton acceptor is aspartate 80.

This sequence belongs to the Maf family. It depends on a divalent metal cation as a cofactor.

It localises to the cytoplasm. The catalysed reaction is a ribonucleoside 5'-triphosphate + H2O = a ribonucleoside 5'-phosphate + diphosphate + H(+). The enzyme catalyses a 2'-deoxyribonucleoside 5'-triphosphate + H2O = a 2'-deoxyribonucleoside 5'-phosphate + diphosphate + H(+). Its function is as follows. Nucleoside triphosphate pyrophosphatase. May have a dual role in cell division arrest and in preventing the incorporation of modified nucleotides into cellular nucleic acids. The chain is Nucleoside triphosphate pyrophosphatase from Mycobacterium sp. (strain JLS).